The chain runs to 419 residues: Creatine kinase S-type, mitochondrial (419 aa).

The transit peptide at 1-39 (MAGTFGRLLAGRVTAALFAAAGSGVLTTGYLLNQQNVKA) directs the protein to the mitochondrion. The 87-residue stretch at 46–132 (KLFPPSADYP…FDPVIKARHN (87 aa)) folds into the Phosphagen kinase N-terminal domain. One can recognise a Phosphagen kinase C-terminal domain in the interval 159–401 (YVLSSRVRTG…NYLVDCEKKL (243 aa)). ATP is bound by residues 162–166 (SSRVR), His225, Arg270, Arg326, 354–359 (RGTGGV), and Asp369.

Belongs to the ATP:guanido phosphotransferase family. In terms of assembly, exists as an octamer composed of four MTCK homodimers. In terms of tissue distribution, expressed in the leg muscle and heart.

Its subcellular location is the mitochondrion inner membrane. The enzyme catalyses creatine + ATP = N-phosphocreatine + ADP + H(+). In terms of biological role, reversibly catalyzes the transfer of phosphate between ATP and various phosphogens (e.g. creatine phosphate). Creatine kinase isoenzymes play a central role in energy transduction in tissues with large, fluctuating energy demands, such as skeletal muscle, heart, brain and spermatozoa. The chain is Creatine kinase S-type, mitochondrial (CKMT2) from Gallus gallus (Chicken).